A 147-amino-acid polypeptide reads, in one-letter code: Hemoglobin subunit gamma (147 aa).

The 145-residue stretch at 3 to 147 (HFTVEEKAVI…VAIALAHKYH (145 aa)) folds into the Globin domain. Positions 64 and 93 each coordinate heme b.

It belongs to the globin family. In terms of assembly, heterotetramer of two alpha chains and two gamma chains in fetal hemoglobin (Hb F). In terms of tissue distribution, red blood cells.

Its function is as follows. Gamma chains make up the fetal hemoglobin F, in combination with alpha chains. This chain is Hemoglobin subunit gamma (HBG), found in Cheirogaleus medius (Fat-tailed dwarf lemur).